Consider the following 97-residue polypeptide: MKLRPLHDRVVIRRSEEESKTAGGIVLPGSAAEKPNRGEVVAVGTGRILDNGEVRALAVKVGDKVVFGPYSGSNTVKVDGEDLLVMAENEILAVIEG.

This sequence belongs to the GroES chaperonin family. Heptamer of 7 subunits arranged in a ring. Interacts with the chaperonin GroEL.

It is found in the cytoplasm. Together with the chaperonin GroEL, plays an essential role in assisting protein folding. The GroEL-GroES system forms a nano-cage that allows encapsulation of the non-native substrate proteins and provides a physical environment optimized to promote and accelerate protein folding. GroES binds to the apical surface of the GroEL ring, thereby capping the opening of the GroEL channel. This is Co-chaperonin GroES from Pseudomonas entomophila (strain L48).